The following is a 429-amino-acid chain: Adenylosuccinate synthetase (429 aa).

GTP contacts are provided by residues 13–19 (GDEGKGK) and 41–43 (GHT). Asp14 acts as the Proton acceptor in catalysis. Mg(2+) is bound by residues Asp14 and Gly41. IMP-binding positions include 14–17 (DEGK), 39–42 (NAGH), Thr130, Arg144, Gln225, Thr240, and Arg304. The active-site Proton donor is His42. 300–306 (ATTGRRR) is a substrate binding site. GTP-binding positions include Arg306, 332–334 (KLD), and 417–419 (STG).

It belongs to the adenylosuccinate synthetase family. Homodimer. Mg(2+) serves as cofactor.

The protein resides in the cytoplasm. It catalyses the reaction IMP + L-aspartate + GTP = N(6)-(1,2-dicarboxyethyl)-AMP + GDP + phosphate + 2 H(+). It participates in purine metabolism; AMP biosynthesis via de novo pathway; AMP from IMP: step 1/2. In terms of biological role, plays an important role in the de novo pathway of purine nucleotide biosynthesis. Catalyzes the first committed step in the biosynthesis of AMP from IMP. The polypeptide is Adenylosuccinate synthetase (Buchnera aphidicola subsp. Baizongia pistaciae (strain Bp)).